Consider the following 235-residue polypeptide: REF/SRPP-like protein At2g47780 (235 aa).

Over residues 1–12 (MAEDEIVVEEEQ) the composition is skewed to acidic residues. A disordered region spans residues 1–32 (MAEDEIVVEEEQSQPQEITPVPPSSSSSPSLV).

It belongs to the REF/SRPP family.

This is REF/SRPP-like protein At2g47780 from Arabidopsis thaliana (Mouse-ear cress).